The following is a 1648-amino-acid chain: MVVEAMSSCQFWYFDDITKYGRIEVLNNYVPTTLVTISILILLHNFFIRFYKYDIKKETPTPSLSLKLSSLNLSESDEEMPLTMHAQHNYGSHPSPSELNTDSSALYDRHFSINNIDSGEVNDPTKYHLIKRNMFEKFRVVIEFVIVAFQLLLHCYLSIEKSNLNGDLQKFHFKPHVLLWTILFTLATLRVLNLNQNNKFVNKYSGNIWLVSFANYTVIFLAHILPFRSALIGHVNDYGSSQYYKSQFWLNLVLMALLLTSPIGNNLPVLYQPQQDRAPSPEPYVSLLTFFSFHWVQPFINKAYKNNSLSHSDLWSLKLEDYSINVMKSFLEFRNRPSMRSSRFGISLLRYFLNLFMFQWCFTTISAFSIFVPTILLKKLLDFIEHKDKGSMNLAWFYVFGMFISRFIVAICDHCNLFLGRRVCVRMKSIIISEIYSKALKRKITKQSKPADENNENDMIKHDEVSPQEVNDTTHVNADEESYSSNLGSIINLMSVDAFKISELCAYLHYFLETAIMLTVSLILLYKVIGTAAFVGILITIIIIPINSKLYAVVGTLQAGNLACTDKRVEKLNESFQAIRIIKYFSWEDKFKEGIMLVREKELALLLKRCMVWCVLAFSWFITPTLITGCTFAYSILIEKKQLTTPVAFTALSLFTLLRDPLDRISDMLSYLIQSKISLDRVQRFLETEETDKYDQLTVDKNGKRLAFENVTLRWDSDKDSFVLRNLDIEFMTGKLNVIVGATGSGKTSILMGLLGEMQLSEGKIIVPSLSPRHEYQSQAGVINDSIAYCSQAAWLLNDTVRNNILFNAPFDQARYDAVVEACSLKRDFQILKAGDSTEIGEKGITLSGGQKQRVSLARALYSSAGHLLLDDCLSAVDSHTALWIYDKCISGPLMEGRTCILVTHNIALTMKNADFVVMIEDGKVKEKGTPIELLAKGLLGEDENMKKSIISRSASSASLKGKSERSLGTTPAPVEIVQDSTPVNDDGKLIEEEGKAMGFVGKEIYKWYIKMYGGWYTIVALASVFTAILCLQITQAWWIRNWTVKRFSDVDESNYNLPASTFIVESRNRVLLTNEAGKKESENQNAGIAKFLVVYCLIGVMSSIIGSIKTFVNSLFGIRASKLIFDSLLDRVLHARVRFFDSTPIGRIMNRFSKDIESIDQEIPPNIQSVFYSAIEVFATLLLISYITPAFFPVAIIIVLGYSIVGFFYLTTSRELKRLDSISKSPIFQHFSETLVGVTTIRAFGDEQRFIKENLSMIDQNSMPFFYLWVVNRWLSFRIDLIGALVIFSSGVFILLNINNIDAGLAGISLTYAISFTEAALWLVRQYSELEMNMNSVERVLEYMNIEQEPLIADPANAVTPPPQWPDSGKVEVNNLSLKYAPHLPYVIKDVTFTIEPLEKVGIVGRTGAGKSTIITALFRFLEADTGSIKLDGVNIANIDLKRLRRSITIIPQDPTLFAGSIRSNLDPYDEYSDEEIFTALKRVNLVSTEEMEASTSEIQSNSSKNVNKFLNLESEIAEGGSNFSQGQRQLMCLARSLLRMPKVILLDEATASIDYNSDAKIQETIRQEFNNSTVLTIAHRLRSIVDYDKILVMDAGEVKEFDHPYSLLLEKKSIFYNMCEDSGELDVLIDLAKKSFISRLNSDSKK.

Residues 28 to 48 (NYVPTTLVTISILILLHNFFI) form a helical membrane-spanning segment. Asn-72 carries an N-linked (GlcNAc...) asparagine glycan. Helical transmembrane passes span 140–160 (VVIE…LSIE), 175–195 (PHVL…LNLN), 207–227 (NIWL…ILPF), and 250–270 (LNLV…LPVL). Asn-306 carries N-linked (GlcNAc...) asparagine glycosylation. Transmembrane regions (helical) follow at residues 352-372 (FLNL…SIFV) and 392-412 (MNLA…VAIC). In terms of domain architecture, ABC transmembrane type-1 1 spans 361–674 (CFTTISAFSI…ISDMLSYLIQ (314 aa)). A glycan (N-linked (GlcNAc...) asparagine) is linked at Asn-471. A run of 2 helical transmembrane segments spans residues 501–521 (ISEL…LTVS) and 523–543 (ILLY…TIII). Asn-573 carries an N-linked (GlcNAc...) asparagine glycan. The next 2 helical transmembrane spans lie at 612 to 632 (VWCV…GCTF) and 643 to 662 (LTTP…RDPL). The region spanning 706 to 947 (LAFENVTLRW…GLLGEDENMK (242 aa)) is the ABC transporter 1 domain. Asn-710 carries N-linked (GlcNAc...) asparagine glycosylation. Residue 741–748 (GATGSGKT) coordinates ATP. N-linked (GlcNAc...) asparagine glycosylation is found at Asn-784 and Asn-798. Residues 1012 to 1032 (MYGGWYTIVALASVFTAILCL) form a helical membrane-spanning segment. Residues 1032 to 1333 (LQITQAWWIR…LVRQYSELEM (302 aa)) form the ABC transmembrane type-1 2 domain. A glycan (N-linked (GlcNAc...) asparagine) is linked at Asn-1042. Transmembrane regions (helical) follow at residues 1089 to 1109 (IAKF…IGSI), 1168 to 1188 (IQSV…ISYI), and 1191 to 1211 (AFFP…FFYL). N-linked (GlcNAc...) asparagine glycosylation is present at Asn-1255. Transmembrane regions (helical) follow at residues 1282–1302 (LIGA…INNI) and 1305–1325 (GLAG…LWLV). The ABC transporter 2 domain maps to 1372 to 1622 (VEVNNLSLKY…KKSIFYNMCE (251 aa)). Asn-1376 carries N-linked (GlcNAc...) asparagine glycosylation. ATP is bound at residue 1406–1413 (GRTGAGKS). 3 N-linked (GlcNAc...) asparagine glycosylation sites follow: Asn-1503, Asn-1524, and Asn-1573.

The protein belongs to the ABC transporter superfamily. ABCC family. Conjugate transporter (TC 3.A.1.208) subfamily.

The protein resides in the membrane. Pleiotropic ABC efflux transporter that might be involved in the resistance to azoles such as fluconazole. The polypeptide is Pleiotropic ABC efflux transporter of multiple drugs YBT1 (Candida glabrata (strain ATCC 2001 / BCRC 20586 / JCM 3761 / NBRC 0622 / NRRL Y-65 / CBS 138) (Yeast)).